A 323-amino-acid polypeptide reads, in one-letter code: Ankyrin repeat and SOCS box protein 11 (323 aa).

ANK repeat units follow at residues 64-93, 97-126, 130-159, 162-191, 195-224, 227-256, and 260-289; these read ADRS…NVNL, NRVS…HVNA, HGAT…KAQL, YLAS…NIEQ, QLGT…SVDH, WLDT…NLNL, and QGKS…ALSQ. Residues 273–323 form the SOCS box domain; that stretch reads SVRQALLLHEGPPALSQLCRLCVRKCLGRTCHHAIYALGLPESLEKFLLYQ.

It belongs to the ankyrin SOCS box (ASB) family. Substrate-recognition component of the ECS(ASB11) complex, composed of ASB11, CUL5, ELOB, ELOC and RNF7/RBX2.

Its subcellular location is the endoplasmic reticulum. Its pathway is protein modification; protein ubiquitination. Functionally, substrate-recognition component of a cullin-5-RING E3 ubiquitin-protein ligase complex (ECS complex, also named CRL5 complex), which mediates the ubiquitination and subsequent proteasomal degradation of target proteins, such as BIK, DIRAS2 and RPN1. The ECS(ASB11) complex acts as a regulator of the endoplasmic reticulum unfolded protein response by mediating ubiquitination and degradation of BIK. The protein is Ankyrin repeat and SOCS box protein 11 (Asb11) of Mus musculus (Mouse).